The following is a 361-amino-acid chain: 3-dehydroquinate synthase (361 aa).

Residues Asp-71–Lys-76, Gly-105–Asp-109, Thr-129–Thr-130, Lys-142, Lys-151, and Cys-169–Thr-172 contribute to the NAD(+) site. Zn(2+)-binding residues include Glu-184, His-247, and His-264.

The protein belongs to the sugar phosphate cyclases superfamily. Dehydroquinate synthase family. The cofactor is Co(2+). Requires Zn(2+) as cofactor. It depends on NAD(+) as a cofactor.

The protein localises to the cytoplasm. It catalyses the reaction 7-phospho-2-dehydro-3-deoxy-D-arabino-heptonate = 3-dehydroquinate + phosphate. Its pathway is metabolic intermediate biosynthesis; chorismate biosynthesis; chorismate from D-erythrose 4-phosphate and phosphoenolpyruvate: step 2/7. Its function is as follows. Catalyzes the conversion of 3-deoxy-D-arabino-heptulosonate 7-phosphate (DAHP) to dehydroquinate (DHQ). This chain is 3-dehydroquinate synthase, found in Edwardsiella ictaluri (strain 93-146).